A 399-amino-acid polypeptide reads, in one-letter code: Phosphoglycerate kinase (399 aa).

Residues 21-23 (DFN), Arg-36, 59-62 (HLGR), Arg-120, and Arg-158 contribute to the substrate site. Residues Lys-209, Gly-297, Glu-328, and 355-358 (GGDS) each bind ATP.

Belongs to the phosphoglycerate kinase family. As to quaternary structure, monomer.

Its subcellular location is the cytoplasm. The catalysed reaction is (2R)-3-phosphoglycerate + ATP = (2R)-3-phospho-glyceroyl phosphate + ADP. It functions in the pathway carbohydrate degradation; glycolysis; pyruvate from D-glyceraldehyde 3-phosphate: step 2/5. This chain is Phosphoglycerate kinase, found in Streptococcus thermophilus (strain ATCC BAA-250 / LMG 18311).